The primary structure comprises 413 residues: Histidine--tRNA ligase (413 aa).

The protein belongs to the class-II aminoacyl-tRNA synthetase family. As to quaternary structure, homodimer.

It localises to the cytoplasm. The enzyme catalyses tRNA(His) + L-histidine + ATP = L-histidyl-tRNA(His) + AMP + diphosphate + H(+). In Fusobacterium nucleatum subsp. nucleatum (strain ATCC 25586 / DSM 15643 / BCRC 10681 / CIP 101130 / JCM 8532 / KCTC 2640 / LMG 13131 / VPI 4355), this protein is Histidine--tRNA ligase.